The chain runs to 417 residues: Hydrogen cyanide synthase subunit HcnC (417 aa).

Residues 1–18 (MIKHYDVVIAGGGVIGAS) form the signal peptide. Residue 7–21 (VVIAGGGVIGASCAY) participates in FAD binding. The N-palmitoyl cysteine moiety is linked to residue cysteine 19. Cysteine 19 carries the S-diacylglycerol cysteine lipid modification. Residues 46–66 (SAGGLWAIGESVGLGCGVIFF) form a helical membrane-spanning segment.

It belongs to the FAD-dependent glycerol-3-phosphate dehydrogenase family. As to quaternary structure, heterotrimer of HcnA, HcnB and HcnC.

Its subcellular location is the cell membrane. The catalysed reaction is glycine + 2 A = hydrogen cyanide + 2 AH2 + CO2. In terms of biological role, a three-component membrane-bound flavoenzyme that catalyzes the formation of hydrogen cyanide, a secondary metabolite, by transfer of electrons to a cyanide-resistant branch of the aerobic respiratory chain. Contributes to suppression of black root rot of tobacco. In Pseudomonas protegens (strain DSM 19095 / LMG 27888 / CFBP 6595 / CHA0), this protein is Hydrogen cyanide synthase subunit HcnC.